The primary structure comprises 37 residues: Large ribosomal subunit protein bL36 (37 aa).

The protein belongs to the bacterial ribosomal protein bL36 family.

In Chromohalobacter salexigens (strain ATCC BAA-138 / DSM 3043 / CIP 106854 / NCIMB 13768 / 1H11), this protein is Large ribosomal subunit protein bL36.